The primary structure comprises 347 residues: MSVMFDPDTAIYPFPPKPTPLSIDEKAYYREKIKRLLKERNAVMVAHYYTDPEIQQLAEETGGCISDSLEMARFGAKHPASTLLVAGVRFMGETAKILSPEKTILMPTLQAECSLDLGCPVEEFNAFCDAHPDHTVVVYANTSAAVKARADWVVTSSIAVELIDHLDSLGEKIIWAPDKHLGRYVQKQTGADILCWQGACIVHDEFKTQALTRLQEEYLDAAILVHPESPQAIVDMADAVGSTSQLIAAAKTLPHQWLIVATDRGIFYKMQQAVPDKELLEAPTAGEGATCRSCAHCPWMAMNGLQAIAEALEQEGSNHEVHVDERLRERALVPLNRMLDFAATLRG.

2 residues coordinate iminosuccinate: His-47 and Ser-68. Cys-113 is a [4Fe-4S] cluster binding site. Residues 139-141 (YAN) and Ser-156 contribute to the iminosuccinate site. Position 200 (Cys-200) interacts with [4Fe-4S] cluster. Residues 226–228 (HPE) and Thr-243 each bind iminosuccinate. Cys-297 provides a ligand contact to [4Fe-4S] cluster.

Belongs to the quinolinate synthase family. Type 1 subfamily. The cofactor is [4Fe-4S] cluster.

Its subcellular location is the cytoplasm. It catalyses the reaction iminosuccinate + dihydroxyacetone phosphate = quinolinate + phosphate + 2 H2O + H(+). Its pathway is cofactor biosynthesis; NAD(+) biosynthesis; quinolinate from iminoaspartate: step 1/1. Its function is as follows. Catalyzes the condensation of iminoaspartate with dihydroxyacetone phosphate to form quinolinate. The chain is Quinolinate synthase from Shigella dysenteriae serotype 1 (strain Sd197).